The following is a 202-amino-acid chain: Matrix protein (202 aa).

Positions 14 to 33 (EDTQKPSPASAPPDGDDLWL) are disordered. The short motif at 35 to 38 (PPEY) is the PPXY motif element. The tract at residues 115–151 (KLRRTLIFQWADSRGPLEGEELEHSQEITWDDDTEFV) is essential for glycoprotein binding.

This sequence belongs to the lyssavirus matrix protein family. As to quaternary structure, homomultimer. Interacts with nucleoprotein and with the cytoplasmic domain of glycoprotein. Interacts with host ATP6V1A; this interaction plays an important role in virion uncoating after viral entry.

It is found in the virion membrane. The protein resides in the host endomembrane system. Its subcellular location is the host cytoplasm. In terms of biological role, plays a major role in assembly, budding and uncoating of virion after membrane fusion. Completely covers the ribonucleoprotein coil and keep it in condensed bullet-shaped form. Inhibits viral transcription and stimulates replication. Plays a major role in early induction of TRAIL-mediated apoptosis in infected neurons. Inhibits the integrated stress response (ISR) in the infected cell by blocking the formation of stress granules. The chain is Matrix protein (M) from Rabies virus (strain HEP-Flury) (RABV).